A 621-amino-acid chain; its full sequence is 1-deoxy-D-xylulose-5-phosphate synthase (621 aa).

Residues H80 and 121–123 (GHS) contribute to the thiamine diphosphate site. Residue D152 participates in Mg(2+) binding. Thiamine diphosphate is bound by residues 153 to 154 (GA), N181, Y288, and E370. N181 contacts Mg(2+).

This sequence belongs to the transketolase family. DXPS subfamily. In terms of assembly, homodimer. Requires Mg(2+) as cofactor. The cofactor is thiamine diphosphate.

The enzyme catalyses D-glyceraldehyde 3-phosphate + pyruvate + H(+) = 1-deoxy-D-xylulose 5-phosphate + CO2. It functions in the pathway metabolic intermediate biosynthesis; 1-deoxy-D-xylulose 5-phosphate biosynthesis; 1-deoxy-D-xylulose 5-phosphate from D-glyceraldehyde 3-phosphate and pyruvate: step 1/1. In terms of biological role, catalyzes the acyloin condensation reaction between C atoms 2 and 3 of pyruvate and glyceraldehyde 3-phosphate to yield 1-deoxy-D-xylulose-5-phosphate (DXP). The chain is 1-deoxy-D-xylulose-5-phosphate synthase from Shewanella frigidimarina (strain NCIMB 400).